Here is a 318-residue protein sequence, read N- to C-terminus: Formimidoylglutamase (318 aa).

Mn(2+) contacts are provided by His-130, Asp-155, His-157, Asp-159, Asp-246, and Asp-248.

It belongs to the arginase family. Requires Mn(2+) as cofactor.

It carries out the reaction N-formimidoyl-L-glutamate + H2O = formamide + L-glutamate. It functions in the pathway amino-acid degradation; L-histidine degradation into L-glutamate; L-glutamate from N-formimidoyl-L-glutamate (hydrolase route): step 1/1. Functionally, catalyzes the conversion of N-formimidoyl-L-glutamate to L-glutamate and formamide. The chain is Formimidoylglutamase from Photorhabdus laumondii subsp. laumondii (strain DSM 15139 / CIP 105565 / TT01) (Photorhabdus luminescens subsp. laumondii).